A 592-amino-acid chain; its full sequence is Aspartate--tRNA(Asp/Asn) ligase (592 aa).

Glutamate 175 lines the L-aspartate pocket. Residues 199 to 202 (QLFK) are aspartate. L-aspartate is bound at residue arginine 221. Residues 221–223 (RDE) and glutamine 230 each bind ATP. Histidine 450 is an L-aspartate binding site. Glutamate 483 provides a ligand contact to ATP. Arginine 490 provides a ligand contact to L-aspartate. ATP is bound at residue 535–538 (GLDR).

The protein belongs to the class-II aminoacyl-tRNA synthetase family. Type 1 subfamily. Homodimer.

It is found in the cytoplasm. It catalyses the reaction tRNA(Asx) + L-aspartate + ATP = L-aspartyl-tRNA(Asx) + AMP + diphosphate. Functionally, aspartyl-tRNA synthetase with relaxed tRNA specificity since it is able to aspartylate not only its cognate tRNA(Asp) but also tRNA(Asn). Reaction proceeds in two steps: L-aspartate is first activated by ATP to form Asp-AMP and then transferred to the acceptor end of tRNA(Asp/Asn). This Acinetobacter baumannii (strain ATCC 17978 / DSM 105126 / CIP 53.77 / LMG 1025 / NCDC KC755 / 5377) protein is Aspartate--tRNA(Asp/Asn) ligase.